The primary structure comprises 654 residues: WD repeat-containing protein 70 (654 aa).

Disordered regions lie at residues 1–26 (MERS…VTMG) and 43–175 (FEQT…DSHE). Residues 45–78 (QTRRTAVERSRKTLEAREKEEEMNREKELRRQNE) are compositionally biased toward basic and acidic residues. A compositionally biased stretch (low complexity) spans 99–111 (RDTSSSESEQSSD). A compositionally biased stretch (acidic residues) spans 147–164 (NEEEEEAEEEEEEEEEEE). Over residues 165-175 (NPVHKIPDSHE) the composition is skewed to basic and acidic residues. WD repeat units lie at residues 180 to 219 (HGTK…ASFK), 227 to 268 (CECH…ECIK), 281 to 321 (GHTA…KQKS), 330 to 369 (GKKV…HPKF), 376 to 415 (DSGT…KPLF), 421 to 466 (PTMF…RVYE), and 469 to 508 (ITDA…QRGA). Lys296 is covalently cross-linked (Glycyl lysine isopeptide (Lys-Gly) (interchain with G-Cter in SUMO2)). Lys452 is modified (N6-acetyllysine). The span at 540 to 565 (REPRQRSTRKQLEKDRLDPLKSHKPE) shows a compositional bias: basic and acidic residues. Residues 540–579 (REPRQRSTRKQLEKDRLDPLKSHKPEPPVAGPGRGGRVGT) form a disordered region. The residue at position 579 (Thr579) is a Phosphothreonine. Residues Lys590 and Lys596 each participate in a glycyl lysine isopeptide (Lys-Gly) (interchain with G-Cter in SUMO2) cross-link. Residues Ser621 and Ser638 each carry the phosphoserine modification. Residues 630–654 (KTMFAQVESDDEEAKNEPEWKKRKI) are disordered. Positions 644–654 (KNEPEWKKRKI) are enriched in basic and acidic residues.

It belongs to the WD repeat GAD-1 family.

This Homo sapiens (Human) protein is WD repeat-containing protein 70 (WDR70).